An 853-amino-acid polypeptide reads, in one-letter code: DNA (cytosine-5)-methyltransferase 3B (853 aa).

Residues 1–20 show a composition bias toward basic and acidic residues; that stretch reads MKGDTRHLNGEEDAGGREDS. Residues 1–218 form a disordered region; the sequence is MKGDTRHLNG…SGDGDSSEYQ (218 aa). The interaction with DNMT1 and DNMT3A stretch occupies residues 1 to 298; sequence MKGDTRHLNG…LATFNKLVSY (298 aa). Over residues 72-81 the composition is skewed to acidic residues; it reads GDGDGEDGDG. Ser82 carries the phosphoserine modification. Lys89 participates in a covalent cross-link: Glycyl lysine isopeptide (Lys-Gly) (interchain with G-Cter in SUMO2). Position 96 is a phosphothreonine (Thr96). Phosphoserine occurs at positions 100 and 110. Basic residues predominate over residues 115–130; that stretch reads ERHRPSPRSTRGRQGR. Ser136, Ser195, Ser202, and Ser209 each carry phosphoserine. The segment covering 179–199 has biased composition (polar residues); it reads GTPQSSSTPYARLAQDSQQGG. Residues 225–283 form the PWWP domain; it reads IGDLVWGKIKGFSWWPAMVVSWKATSKRQAMSGMRWVQWFGDGKFSEVSADKLVALGLF. Residues 341–423 are disordered; sequence KPTGIEGLKP…DQSREQMASD (83 aa). Basic and acidic residues-rich tracts occupy residues 368–385 and 407–417; these read RKLE…RTAD and GKDRGDEDQSR. A Citrulline modification is found at Arg410. The 133-residue stretch at 423-555 folds into the ADD domain; the sequence is DVANNKSSLE…LQAFFTSDTG (133 aa). The GATA-type; atypical zinc-finger motif lies at 434–464; that stretch reads GCLSCGRKNPVSFHPLFEGGLCQTCRDRFLE. An interaction with the PRC2/EED-EZH2 complex region spans residues 435-527; the sequence is CLSCGRKNPV…LQEPWSCYMC (93 aa). A PHD-type; atypical zinc finger spans residues 475-531; that stretch reads QSYCTVCCEGRELLLCSNTSCCRCFCVECLEVLVGTGTAAEAKLQEPWSCYMCLPQR. The SAM-dependent MTase C5-type domain maps to 575–853; that stretch reads IRVLSLFDGI…APLKDYFACE (279 aa). Residues 582 to 586 and Glu605 each bind S-adenosyl-L-methionine; that span reads DGIAT. Lys617 participates in a covalent cross-link: Glycyl lysine isopeptide (Lys-Gly) (interchain with G-Cter in SUMO2). 627–629 is a binding site for S-adenosyl-L-methionine; it reads DVR. Cys651 is an active-site residue. Position 832-834 (832-834) interacts with S-adenosyl-L-methionine; that stretch reads RSW.

Belongs to the class I-like SAM-binding methyltransferase superfamily. C5-methyltransferase family. As to quaternary structure, interacts with BAZ2A/TIP5, SUV39H1 and CBX4. Interacts with UHRF1. Interacts with DNMT1 and DNMT3A, SETDB1, UBL1, UBE2I9 and ZHX1. Interacts with the PRC2/EED-EZH2 complex. Post-translationally, sumoylated. In terms of processing, citrullinated by PADI4. In terms of tissue distribution, ubiquitous; highly expressed in fetal liver, heart, kidney, placenta, and at lower levels in spleen, colon, brain, liver, small intestine, lung, peripheral blood mononuclear cells, and skeletal muscle. Isoform 1 is expressed in all tissues except brain, skeletal muscle and PBMC, 3 is ubiquitous, 4 is expressed in all tissues except brain, skeletal muscle, lung and prostate and 5 is detectable only in testis and at very low level in brain and prostate.

It localises to the nucleus. The catalysed reaction is a 2'-deoxycytidine in DNA + S-adenosyl-L-methionine = a 5-methyl-2'-deoxycytidine in DNA + S-adenosyl-L-homocysteine + H(+). With respect to regulation, activated by binding to the regulatory factor DNMT3L. Its function is as follows. Required for genome-wide de novo methylation and is essential for the establishment of DNA methylation patterns during development. DNA methylation is coordinated with methylation of histones. May preferentially methylates nucleosomal DNA within the nucleosome core region. May function as transcriptional co-repressor by associating with CBX4 and independently of DNA methylation. Seems to be involved in gene silencing. In association with DNMT1 and via the recruitment of CTCFL/BORIS, involved in activation of BAG1 gene expression by modulating dimethylation of promoter histone H3 at H3K4 and H3K9. Isoforms 4 and 5 are probably not functional due to the deletion of two conserved methyltransferase motifs. Functions as a transcriptional corepressor by associating with ZHX1. Required for DUX4 silencing in somatic cells. The protein is DNA (cytosine-5)-methyltransferase 3B (DNMT3B) of Homo sapiens (Human).